The primary structure comprises 212 residues: ATP synthase subunit 5, mitochondrial (212 aa).

The N-terminal 17 residues, 1–17 (MFNRVFTRSFASSLRAA), are a transit peptide targeting the mitochondrion.

Belongs to the ATPase delta chain family. In terms of assembly, F-type ATPases have 2 components, CF(1) - the catalytic core - and CF(0) - the membrane proton channel. CF(1) has five subunits: alpha(3), beta(3), gamma(1), delta(1), epsilon(1). CF(0) has three main subunits: a, b and c.

It is found in the mitochondrion. Its subcellular location is the mitochondrion inner membrane. In terms of biological role, mitochondrial membrane ATP synthase (F(1)F(0) ATP synthase or Complex V) produces ATP from ADP in the presence of a proton gradient across the membrane which is generated by electron transport complexes of the respiratory chain. F-type ATPases consist of two structural domains, F(1) - containing the extramembraneous catalytic core and F(0) - containing the membrane proton channel, linked together by a central stalk and a peripheral stalk. During catalysis, ATP synthesis in the catalytic domain of F(1) is coupled via a rotary mechanism of the central stalk subunits to proton translocation. Part of the complex F(0) domain and the peripheric stalk, which acts as a stator to hold the catalytic alpha(3)beta(3) subcomplex and subunit a/ATP6 static relative to the rotary elements. The polypeptide is ATP synthase subunit 5, mitochondrial (ATP5) (Saccharomyces cerevisiae (strain ATCC 204508 / S288c) (Baker's yeast)).